Here is a 278-residue protein sequence, read N- to C-terminus: tRNA (guanine-N(7)-)-methyltransferase (278 aa).

S-adenosyl-L-methionine-binding positions include glycine 95, 118-119 (EI), 153-154 (NA), and cysteine 173. Residue aspartate 176 is part of the active site. 251–253 (TEE) serves as a coordination point for S-adenosyl-L-methionine.

This sequence belongs to the class I-like SAM-binding methyltransferase superfamily. TrmB family. In terms of assembly, forms a complex with TRM82.

It localises to the nucleus. It catalyses the reaction guanosine(46) in tRNA + S-adenosyl-L-methionine = N(7)-methylguanosine(46) in tRNA + S-adenosyl-L-homocysteine. It functions in the pathway tRNA modification; N(7)-methylguanine-tRNA biosynthesis. Its function is as follows. Catalyzes the formation of N(7)-methylguanine at position 46 (m7G46) in tRNA. The chain is tRNA (guanine-N(7)-)-methyltransferase from Kluyveromyces lactis (strain ATCC 8585 / CBS 2359 / DSM 70799 / NBRC 1267 / NRRL Y-1140 / WM37) (Yeast).